Reading from the N-terminus, the 153-residue chain is Regulatory protein RecX (153 aa).

The protein belongs to the RecX family.

It localises to the cytoplasm. Modulates RecA activity. This is Regulatory protein RecX from Neisseria gonorrhoeae (strain ATCC 700825 / FA 1090).